The primary structure comprises 195 residues: Putative Tricorn-like protease N-terminal subunit (195 aa).

The protein belongs to the peptidase S41B family.

It is found in the cytoplasm. In terms of biological role, degrades oligopeptides in a sequential manner. The protein is Putative Tricorn-like protease N-terminal subunit (triN) of Sulfurisphaera tokodaii (strain DSM 16993 / JCM 10545 / NBRC 100140 / 7) (Sulfolobus tokodaii).